A 1693-amino-acid chain; its full sequence is uncharacterized protein (1693 aa).

WD repeat units follow at residues 1008-1042 (HHEGPVTVLRISPSMENTPPLVLTATTNGIAYLWS), 1053-1083 (GHQEAITALDWSADGQYFATASADHTVKLWQ), 1094-1124 (GHEDWVRSVHFSPHHQFLVTSGQDNTARIWN), 1135-1165 (GHADWVRNAEFNCHGQILLTASRDGTARLWD), 1176-1206 (GHTSWVRNAQFSPDGQWIVTCSADGTARLWD), 1217-1247 (GHQNWVNNALWSPDGQHIITSSSDGTARVWS), 1258-1288 (GHDHNIHGARFSLDGQKIVTYSTDNTARLWT), 1299-1329 (GHQKEVYDADFSADGRFVFTVSADQTARQWD), 1340-1370 (GHSHWVRNAHFNPKGDRLLTVSRDKTARLWT), 1381-1411 (DHQGWVREGQFSPDGQWIVTGSADKTAQLWN), 1422-1452 (GHQDAVLNVRFSPDSQYIVTASKDGTARVWN), 1463-1493 (HYEKNIFAAEFSADGQFIVTASDDNTAGIWE), 1504-1534 (GHEGPVYFAQFSADSRYILTASVDNTARIWD), 1545-1575 (GHQSIVYQARFSPEGNLIATVSADHTARLWD), 1586-1616 (GHQGLVGTVDWSPDGQMLVTASNDGTARLWD), and 1627-1657 (GHGNWVRSAEFSPDGRWVLTSSADGTAKLWP).

This is an uncharacterized protein from Synechocystis sp. (strain ATCC 27184 / PCC 6803 / Kazusa).